A 123-amino-acid chain; its full sequence is Ribosome-binding factor A (123 aa).

This sequence belongs to the RbfA family. As to quaternary structure, monomer. Binds 30S ribosomal subunits, but not 50S ribosomal subunits or 70S ribosomes.

It is found in the cytoplasm. In terms of biological role, one of several proteins that assist in the late maturation steps of the functional core of the 30S ribosomal subunit. Associates with free 30S ribosomal subunits (but not with 30S subunits that are part of 70S ribosomes or polysomes). Required for efficient processing of 16S rRNA. May interact with the 5'-terminal helix region of 16S rRNA. This chain is Ribosome-binding factor A, found in Chlamydia trachomatis serovar A (strain ATCC VR-571B / DSM 19440 / HAR-13).